Reading from the N-terminus, the 385-residue chain is Putative F-box protein At1g47765 (385 aa).

Positions 1–19 (MEQQKQKKRKVVSKSKRTQ) are enriched in basic residues. Residues 1 to 24 (MEQQKQKKRKVVSKSKRTQSKSAS) are disordered. One can recognise an F-box domain in the interval 20–69 (SKSASSLPLDLTSEILLRLPEKSIARFRCVSKLWLSITTDPYFINLFETR).

This Arabidopsis thaliana (Mouse-ear cress) protein is Putative F-box protein At1g47765.